The chain runs to 335 residues: MGNVSSAVKHCLSYETFLRDYPWLPRLLWEEKCSELPKLPVYVKIVEVGPRDGLQNEKEIVPTEVKIQLIDLLSQTGLPVIEATSFVSSKWVAQMADHTAVLKGIKRSPDVRYPVLTPNIQGFQAAVAAGANEVAVFGSASETFSRKNINCSIEESLQRFEQVVSAAKQEGIPVRGYVSCALGCPYEGQVKPSQVTKVAKRLFELGCYEVSLGDTIGVGTAGSMAEMLSDVLTEVPAGALAVHCHDTYGQALPNILIALQMGVSVVDASVAGLGGCPFAKGASGNVSTEDLLYMLHGLGIETGVDLLKVMEAGDFICKALNRKTNSKVSQATRNN.

Gly-2 carries N-myristoyl glycine lipidation. A Pyruvate carboxyltransferase domain is found at 43–310 (VKIVEVGPRD…ETGVDLLKVM (268 aa)). Arg-51 is a binding site for substrate. Asp-52 lines the a divalent metal cation pocket. Position 58 is an N6-acetyllysine (Lys-58). Residues His-243 and His-245 each contribute to the a divalent metal cation site. Cys-276 is an active-site residue. Asn-285 is an a divalent metal cation binding site.

Belongs to the HMG-CoA lyase family. A divalent metal cation serves as cofactor.

It is found in the cytoplasm. Its subcellular location is the cytosol. The protein resides in the endoplasmic reticulum membrane. The enzyme catalyses (3S)-3-hydroxy-3-methylglutaryl-CoA = acetoacetate + acetyl-CoA. It participates in metabolic intermediate metabolism; (S)-3-hydroxy-3-methylglutaryl-CoA degradation; acetoacetate from (S)-3-hydroxy-3-methylglutaryl-CoA: step 1/1. In terms of biological role, non-mitochondrial 3-hydroxy-3-methylglutaryl-CoA lyase that catalyzes a cation-dependent cleavage of (S)-3-hydroxy-3-methylglutaryl-CoA into acetyl-CoA and acetoacetate, a key step in ketogenesis, the products of which support energy production in nonhepatic animal tissues. The chain is 3-hydroxy-3-methylglutaryl-CoA lyase, cytoplasmic (hmgcll1) from Danio rerio (Zebrafish).